Reading from the N-terminus, the 237-residue chain is Ribonuclease PH (237 aa).

Residues Arg86 and 124–126 (GTR) each bind phosphate.

This sequence belongs to the RNase PH family. As to quaternary structure, homohexameric ring arranged as a trimer of dimers.

The catalysed reaction is tRNA(n+1) + phosphate = tRNA(n) + a ribonucleoside 5'-diphosphate. In terms of biological role, phosphorolytic 3'-5' exoribonuclease that plays an important role in tRNA 3'-end maturation. Removes nucleotide residues following the 3'-CCA terminus of tRNAs; can also add nucleotides to the ends of RNA molecules by using nucleoside diphosphates as substrates, but this may not be physiologically important. Probably plays a role in initiation of 16S rRNA degradation (leading to ribosome degradation) during starvation. The polypeptide is Ribonuclease PH (Tolumonas auensis (strain DSM 9187 / NBRC 110442 / TA 4)).